Consider the following 144-residue polypeptide: Transcription antitermination protein NusB (144 aa).

The protein belongs to the NusB family.

In terms of biological role, involved in transcription antitermination. Required for transcription of ribosomal RNA (rRNA) genes. Binds specifically to the boxA antiterminator sequence of the ribosomal RNA (rrn) operons. The polypeptide is Transcription antitermination protein NusB (Pasteurella multocida (strain Pm70)).